The following is an 87-amino-acid chain: Cytochrome c5 (87 aa).

C19, C22, H23, and M63 together coordinate heme. A disulfide bond links C69 and C72.

This sequence belongs to the cytochrome c family. In terms of assembly, homodimer. In terms of processing, binds 1 heme group per subunit.

Functionally, it is unreactive with cytochrome c reductase or oxidase but seems to function as an intermediate in nitrate respiration of facultative anaerobic pseudmonads. This chain is Cytochrome c5, found in Ectopseudomonas mendocina (Pseudomonas mendocina).